The primary structure comprises 400 residues: Nicotinate phosphoribosyltransferase (400 aa).

His220 is subject to Phosphohistidine; by autocatalysis.

The protein belongs to the NAPRTase family. In terms of processing, transiently phosphorylated on a His residue during the reaction cycle. Phosphorylation strongly increases the affinity for substrates and increases the rate of nicotinate D-ribonucleotide production. Dephosphorylation regenerates the low-affinity form of the enzyme, leading to product release.

The enzyme catalyses nicotinate + 5-phospho-alpha-D-ribose 1-diphosphate + ATP + H2O = nicotinate beta-D-ribonucleotide + ADP + phosphate + diphosphate. Its pathway is cofactor biosynthesis; NAD(+) biosynthesis; nicotinate D-ribonucleotide from nicotinate: step 1/1. Catalyzes the synthesis of beta-nicotinate D-ribonucleotide from nicotinate and 5-phospho-D-ribose 1-phosphate at the expense of ATP. The chain is Nicotinate phosphoribosyltransferase from Citrobacter koseri (strain ATCC BAA-895 / CDC 4225-83 / SGSC4696).